The chain runs to 818 residues: Response regulator SSK1 (818 aa).

The 159-residue stretch at 611–769 (NVLIVEDNPI…WLERKVMEWG (159 aa)) folds into the Response regulatory domain. 4-aspartylphosphate is present on aspartate 660.

The protein belongs to the SSK1 family.

It localises to the cytoplasm. Functionally, two-domain response regulator protein in the two-component signal transduction system of the HOG1 pathway. Modulates stress response, melanin biosynthesis and virulence via its regulation of the phosphorylation of HOG1. The protein is Response regulator SSK1 of Verticillium dahliae (strain VdLs.17 / ATCC MYA-4575 / FGSC 10137) (Verticillium wilt).